The following is a 199-amino-acid chain: GTP-binding protein Di-Ras2 (199 aa).

GTP is bound by residues 14 to 21, 33 to 39, 61 to 65, and 121 to 124; these read GAGGVGKS, RESYIPT, DTTGS, and NKCD. At Ser35 the chain carries Phosphoserine. The Effector region signature appears at 36–44; it reads YIPTVEDTY. Ser126 is modified (phosphoserine). Position 152 to 153 (152 to 153) interacts with GTP; it reads AK. Cys196 carries the post-translational modification Cysteine methyl ester. Cys196 carries S-geranylgeranyl cysteine lipidation. A propeptide spans 197–199 (removed in mature form); the sequence is VIM.

Belongs to the small GTPase superfamily. Di-Ras family. Post-translationally, ubiquitinated by the ECS(ASB11) complex via 'Lys-11'-linked ubiquitin chains, leading to its degradation by the proteasome.

The protein resides in the cell membrane. The enzyme catalyses GTP + H2O = GDP + phosphate + H(+). Functionally, displays low GTPase activity and exists predominantly in the GTP-bound form. This chain is GTP-binding protein Di-Ras2 (DIRAS2), found in Pongo abelii (Sumatran orangutan).